A 138-amino-acid polypeptide reads, in one-letter code: Small ribosomal subunit protein uS11c (138 aa).

Residues Met1–Ile25 form a disordered region. Positions Gly9–Ile25 are enriched in basic residues.

This sequence belongs to the universal ribosomal protein uS11 family. As to quaternary structure, part of the 30S ribosomal subunit.

Its subcellular location is the plastid. It localises to the chloroplast. The protein is Small ribosomal subunit protein uS11c of Eucalyptus globulus subsp. globulus (Tasmanian blue gum).